We begin with the raw amino-acid sequence, 140 residues long: Histone H3-like centromeric protein A (140 aa).

The tract at residues 1–46 (MGPRRRSRKPEAPRRRSPSPTPTPGPSRRGPSLGASSHQHSRRRQG) is disordered. Gly2 carries the post-translational modification N,N,N-trimethylglycine. Residue Ser7 is modified to Phosphoserine; by AURKA and AURKB. Residues Ser17, Ser19, and Ser27 each carry the phosphoserine modification. Residues 26–37 (PSRRGPSLGASS) show a composition bias toward low complexity. The interval 39–54 (QHSRRRQGWLKEIRKL) is important for flexibility of DNA ends that protrude from nucleosomes. At Ser68 the chain carries Phosphoserine. The CATD stretch occupies residues 75-116 (CVKFTRGVDFNWQAQALLALQEAAEAFLVHLFEDAYLLTLHA).

It belongs to the histone H3 family. As to quaternary structure, component of centromeric nucleosomes, where DNA is wrapped around a histone octamer core. The octamer contains two molecules each of H2A, H2B, CENPA and H4 assembled in one CENPA-H4 heterotetramer and two H2A-H2B heterodimers. CENPA modulates the DNA-binding characteristics of nucleosomes so that protruding DNA ends have higher flexibility than in nucleosomes containing conventional histone H3. Inhibits binding of histone H1 to nucleosomes, since histone H1 binds preferentially to rigid DNA linkers that protrude from nucleosomes. Nucleosomes containing CENPA also contain histone H2A variants such as MACROH2A and H2A.Z/H2AZ1. The CENPA-H4 heterotetramer is more compact and structurally more rigid than corresponding H3-H4 heterotetramers. Can assemble into nucleosomes that contain both CENPA and histone H3.3; these nucleosomes interact with a single CENPC chain. Heterotrimer composed of HJURP, CENPA and histone H4, where HJURP interacts with the dimer formed by CENPA and histone H4 and prevents tetramerization of CENPA and H4. Component of the CENPA-NAC complex, at least composed of CENPA, CENPC, CENPH, CENPM, CENPN, CENPT and CENPU. Interacts (via CATD domain) with HJURP; the interaction is direct and is required for its localization to centromeres. Interacts with CENPC, CENPN and CENPT; interaction is direct. Part of a centromere complex consisting of CENPA, CENPT and CENPW. Identified in centromere complexes containing histones H2A, H2B and H4, and at least CENPA, CENPB, CENPC, CENPT, CENPN, HJURP, SUPT16H, SSRP1 and RSF1. Can self-associate. The CENPA-H4 heterotetramer can bind DNA by itself (in vitro). Interacts with CDK1, PPP1CA and RBBP7. In terms of assembly, (Microbial infection) Interacts directly with herpes virus HHV-1 protein ICP0. Post-translationally, ubiquitinated. Interaction with herpes virus HSV-1 ICP0 protein, leads to its degradation by the proteasome pathway. In terms of processing, trimethylated by NTMT1 at the N-terminal glycine after cleavage of Met-1. Methylation is low before incorporation into nucleosomes and increases with cell cycle progression, with the highest levels in mitotic nucleosomes. Phosphorylated by CDK1 at Ser-68 during early mitosis; this abolishes association with chromatin and centromeres, prevents interaction with HJURP and thereby prevents premature assembly of CENPA into centromeres. Dephosphorylated at Ser-68 by PPP1CA during late mitosis. Phosphorylation of Ser-7 by AURKA and AURKB during prophase is required for localization of AURKA and AURKB at inner centromere and is essential for normal cytokinesis. Initial phosphorylation during prophase is mediated by AURKA and is maintained by AURKB. Post-translationally, poly-ADP-ribosylated by PARP1.

The protein localises to the nucleus. The protein resides in the chromosome. It is found in the centromere. Its function is as follows. Histone H3-like nucleosomal protein that is specifically found in centromeric nucleosomes. Replaces conventional H3 in the nucleosome core of centromeric chromatin that serves as an assembly site for the inner kinetochore. The presence of CENPA subtly modifies the nucleosome structure and the way DNA is wrapped around the nucleosome and gives rise to protruding DNA ends that are less well-ordered and rigid compared to nucleosomes containing histone H3. May serve as an epigenetic mark that propagates centromere identity through replication and cell division. Required for recruitment and assembly of kinetochore proteins, and as a consequence required for progress through mitosis, chromosome segregation and cytokinesis. This Homo sapiens (Human) protein is Histone H3-like centromeric protein A (CENPA).